A 235-amino-acid chain; its full sequence is Probable inactive serine protease 37 (235 aa).

The N-terminal stretch at 1-19 (MKYVFYLGVLAGTFFFADS) is a signal peptide. A Peptidase S1 domain is found at 20–233 (SVQKEDPAPY…YVSWIENTAK (214 aa)). 3 disulfide bridges follow: cysteine 40/cysteine 56, cysteine 131/cysteine 198, and cysteine 163/cysteine 177.

Belongs to the peptidase S1 family. Testis-specific. Expressed in spermatids (at protein level).

It localises to the cytoplasmic vesicle. The protein resides in the secretory vesicle. The protein localises to the acrosome. It is found in the secreted. Functionally, plays a role in male fertility. May have a role in sperm migration or binding to zona-intact eggs. Involved in the activation of the proacrosin/acrosin system. This chain is Probable inactive serine protease 37, found in Homo sapiens (Human).